The primary structure comprises 175 residues: Alkyl hydroperoxide reductase AhpD (175 aa).

The active-site Proton donor is the Cys131. Residues Cys131 and Cys134 are joined by a disulfide bond. Cys134 functions as the Cysteine sulfenic acid (-SOH) intermediate in the catalytic mechanism.

Belongs to the AhpD family.

The enzyme catalyses N(6)-[(R)-dihydrolipoyl]-L-lysyl-[lipoyl-carrier protein] + a hydroperoxide = N(6)-[(R)-lipoyl]-L-lysyl-[lipoyl-carrier protein] + an alcohol + H2O. In terms of biological role, antioxidant protein with alkyl hydroperoxidase activity. Required for the reduction of the AhpC active site cysteine residues and for the regeneration of the AhpC enzyme activity. This chain is Alkyl hydroperoxide reductase AhpD, found in Brucella anthropi (strain ATCC 49188 / DSM 6882 / CCUG 24695 / JCM 21032 / LMG 3331 / NBRC 15819 / NCTC 12168 / Alc 37) (Ochrobactrum anthropi).